The sequence spans 287 residues: Mitochondrial glycine transporter B (287 aa).

Solcar repeat units lie at residues 7–97 (HPAL…LKQH), 104–188 (PSAG…AKKA), and 198–282 (IAPL…LMAR). The next 6 helical transmembrane spans lie at 13–38 (FMCGSLSGTCSTLLFQPLDLVKTRLQ), 72–98 (GVSPSFMRCIPGVGIYFSTFYSLKQHY), 110–135 (VLLGAGARCVAGVAMLPFTVIKTRFE), 163–186 (GLTATLLRDAPFSGIYVMFYSQAK), 202–228 (VNFGCGVVAGILASLATQPADVIKTHM), and 257–275 (GAVPRSLRRTLMAAMAWTV).

This sequence belongs to the mitochondrial carrier (TC 2.A.29) family. SLC25A38 subfamily. At 24 hours post-fertilization, expressed predominantly in posterior blood island, posterior cardinal vein and circulating blood. At 34 hours post-fertilization, becomes restricted to posterior blood island and circulating blood.

Its subcellular location is the mitochondrion inner membrane. It carries out the reaction glycine(in) = glycine(out). In terms of biological role, mitochondrial glycine transporter that imports glycine into the mitochondrial matrix. Plays an important role in providing glycine for the first enzymatic step in heme biosynthesis, the condensation of glycine with succinyl-CoA to produce 5-aminolevulinate (ALA) in the mitochondrial matrix. Required during erythropoiesis. Functionally, may play a role as pro-apoptotic protein that induces caspase-dependent apoptosis. This chain is Mitochondrial glycine transporter B (slc25a38b), found in Danio rerio (Zebrafish).